The primary structure comprises 274 residues: WIMGHMVNAIEQVDKFLNLGANAIEFDIDFDKDGIAQITHHGIPCDCGRKCTKKAIFTEYLDNIRQVTTPDDPKFREQLVLLALDLKLQRISSAKAYRAGEDVAKKLPDHYWQRGNSRARAYILLNIPLVEDYEFIRAFKDTLKNEGYESYNDKVGINFTGNEDLDKIRDVLEILGIHKQVWQADGITSCFARGTERLKEALEKRDTPGYNYINKVYAWTLVRKSIMRRSLRLGVDGVMSNNPDRVIKVLKEKEFADKFRLATYNDNPWEKFRG.

H5 is a catalytic residue. 2 residues coordinate Mg(2+): E25 and D27. The active-site Nucleophile is the H41. Intrachain disulfides connect C45–C51 and C47–C190. Mg(2+) is bound at residue D85.

This sequence belongs to the arthropod phospholipase D family. Class II subfamily. Requires Mg(2+) as cofactor. As to expression, expressed by the venom gland.

Its subcellular location is the secreted. It catalyses the reaction an N-(acyl)-sphingosylphosphocholine = an N-(acyl)-sphingosyl-1,3-cyclic phosphate + choline. The catalysed reaction is an N-(acyl)-sphingosylphosphoethanolamine = an N-(acyl)-sphingosyl-1,3-cyclic phosphate + ethanolamine. It carries out the reaction a 1-acyl-sn-glycero-3-phosphocholine = a 1-acyl-sn-glycero-2,3-cyclic phosphate + choline. The enzyme catalyses a 1-acyl-sn-glycero-3-phosphoethanolamine = a 1-acyl-sn-glycero-2,3-cyclic phosphate + ethanolamine. Dermonecrotic toxins cleave the phosphodiester linkage between the phosphate and headgroup of certain phospholipids (sphingolipid and lysolipid substrates), forming an alcohol (often choline) and a cyclic phosphate. This toxin acts on sphingomyelin (SM). It may also act on ceramide phosphoethanolamine (CPE), lysophosphatidylcholine (LPC) and lysophosphatidylethanolamine (LPE), but not on lysophosphatidylserine (LPS), and lysophosphatidylglycerol (LPG). It acts by transphosphatidylation, releasing exclusively cyclic phosphate products as second products. Induces dermonecrosis, hemolysis, increased vascular permeability, edema, inflammatory response, and platelet aggregation. In Sicarius cf. damarensis (strain GJB-2008) (Six-eyed sand spider), this protein is Dermonecrotic toxin SdSicTox-betaIIB1bix.